We begin with the raw amino-acid sequence, 905 residues long: Catenin alpha-2 (905 aa).

Position 632 is a phosphothreonine (T632). Phosphoserine occurs at positions 640, 651, and 853. A compositionally biased stretch (basic and acidic residues) spans 869–879 (VKREKPEEFQT). Residues 869–891 (VKREKPEEFQTRVRRGSQKKHIS) form a disordered region. The segment covering 880–890 (RVRRGSQKKHI) has biased composition (basic residues). S891 bears the Phosphoserine mark.

It belongs to the vinculin/alpha-catenin family. In terms of assembly, interacts with CDH1 and CDH2. Interacts with ZNF639; recruits CTNNA2 to the nucleus. Interacts with F-actin.

The protein resides in the cell membrane. Its subcellular location is the cytoplasm. The protein localises to the cytoskeleton. It localises to the cell junction. It is found in the adherens junction. The protein resides in the cell projection. Its subcellular location is the axon. The protein localises to the nucleus. May function as a linker between cadherin adhesion receptors and the cytoskeleton to regulate cell-cell adhesion and differentiation in the nervous system. Required for proper regulation of cortical neuronal migration and neurite growth. It acts as a negative regulator of Arp2/3 complex activity and Arp2/3-mediated actin polymerization. It thereby suppresses excessive actin branching which would impair neurite growth and stability. Regulates morphological plasticity of synapses and cerebellar and hippocampal lamination during development. Functions in the control of startle modulation. The protein is Catenin alpha-2 (CTNNA2) of Pongo abelii (Sumatran orangutan).